Reading from the N-terminus, the 244-residue chain is Flagellar L-ring protein (244 aa).

Positions 1-27 (MLIKSIGMYLIGILILFIALYPRHSFA) are cleaved as a signal peptide.

This sequence belongs to the FlgH family. As to quaternary structure, the basal body constitutes a major portion of the flagellar organelle and consists of four rings (L,P,S, and M) mounted on a central rod.

The protein resides in the cell outer membrane. It localises to the bacterial flagellum basal body. Functionally, assembles around the rod to form the L-ring and probably protects the motor/basal body from shearing forces during rotation. This chain is Flagellar L-ring protein (flgH), found in Helicobacter hepaticus (strain ATCC 51449 / 3B1).